Here is a 482-residue protein sequence, read N- to C-terminus: Dual specificity protein phosphatase 10 (482 aa).

The region spanning 168–285 is the Rhodanese domain; it reads PSQGPVIIDC…FKQNHENLCD (118 aa). Residues 199–215 form an interaction with MAP kinases region; the sequence is KISRRRLQQGKITVLDL. The Tyrosine-protein phosphatase domain maps to 321-464; sequence ELTPILPFLF…LLEFEEDLNN (144 aa). Cys-408 serves as the catalytic Phosphocysteine intermediate.

Belongs to the protein-tyrosine phosphatase family. Non-receptor class dual specificity subfamily. Monomer. Interacts with MAPK14.

It localises to the cytoplasm. Its subcellular location is the nucleus. It catalyses the reaction O-phospho-L-tyrosyl-[protein] + H2O = L-tyrosyl-[protein] + phosphate. The enzyme catalyses O-phospho-L-seryl-[protein] + H2O = L-seryl-[protein] + phosphate. The catalysed reaction is O-phospho-L-threonyl-[protein] + H2O = L-threonyl-[protein] + phosphate. Protein phosphatase involved in the inactivation of MAP kinases. Has a specificity for the MAPK11/MAPK12/MAPK13/MAPK14 subfamily. It preferably dephosphorylates p38. The sequence is that of Dual specificity protein phosphatase 10 (DUSP10) from Bos taurus (Bovine).